The following is a 188-amino-acid chain: Large ribosomal subunit protein eL18 (188 aa).

The disordered stretch occupies residues 153 to 188; sequence GKAPGTPHSHTKPYIRSKGRKFERARGRRASRGYKN. Basic residues-rich tracts occupy residues 161–171 and 178–188; these read SHTKPYIRSKG and RGRRASRGYKN.

The protein belongs to the eukaryotic ribosomal protein eL18 family. As to quaternary structure, component of the large ribosomal subunit.

The protein localises to the cytoplasm. The protein resides in the cytosol. It is found in the rough endoplasmic reticulum. Functionally, component of the large ribosomal subunit. The ribosome is a large ribonucleoprotein complex responsible for the synthesis of proteins in the cell. The sequence is that of Large ribosomal subunit protein eL18 (rpl18) from Ictalurus punctatus (Channel catfish).